A 149-amino-acid chain; its full sequence is Large ribosomal subunit protein uL11 (149 aa).

It belongs to the universal ribosomal protein uL11 family. As to quaternary structure, part of the ribosomal stalk of the 50S ribosomal subunit. Interacts with L10 and the large rRNA to form the base of the stalk. L10 forms an elongated spine to which L12 dimers bind in a sequential fashion forming a multimeric L10(L12)X complex. In terms of processing, one or more lysine residues are methylated.

Forms part of the ribosomal stalk which helps the ribosome interact with GTP-bound translation factors. The polypeptide is Large ribosomal subunit protein uL11 (Methylobacterium radiotolerans (strain ATCC 27329 / DSM 1819 / JCM 2831 / NBRC 15690 / NCIMB 10815 / 0-1)).